A 273-amino-acid polypeptide reads, in one-letter code: Dermonecrotic toxin LspiSicTox-betaIE1i (273 aa).

Positions 25 and 27 each coordinate Mg(2+). The active-site Nucleophile is His-41. Cys-45 and Cys-51 are disulfide-bonded. Residue Asp-85 coordinates Mg(2+).

It belongs to the arthropod phospholipase D family. Class I subfamily. Mg(2+) serves as cofactor. As to expression, expressed by the venom gland.

The protein localises to the secreted. It carries out the reaction an N-(acyl)-sphingosylphosphocholine = an N-(acyl)-sphingosyl-1,3-cyclic phosphate + choline. The catalysed reaction is an N-(acyl)-sphingosylphosphoethanolamine = an N-(acyl)-sphingosyl-1,3-cyclic phosphate + ethanolamine. It catalyses the reaction a 1-acyl-sn-glycero-3-phosphocholine = a 1-acyl-sn-glycero-2,3-cyclic phosphate + choline. The enzyme catalyses a 1-acyl-sn-glycero-3-phosphoethanolamine = a 1-acyl-sn-glycero-2,3-cyclic phosphate + ethanolamine. Dermonecrotic toxins cleave the phosphodiester linkage between the phosphate and headgroup of certain phospholipids (sphingolipid and lysolipid substrates), forming an alcohol (often choline) and a cyclic phosphate. This toxin acts on sphingomyelin (SM). It may also act on ceramide phosphoethanolamine (CPE), lysophosphatidylcholine (LPC) and lysophosphatidylethanolamine (LPE), but not on lysophosphatidylserine (LPS), and lysophosphatidylglycerol (LPG). It acts by transphosphatidylation, releasing exclusively cyclic phosphate products as second products. Induces dermonecrosis, hemolysis, increased vascular permeability, edema, inflammatory response, and platelet aggregation. This Loxosceles spinulosa (Recluse spider) protein is Dermonecrotic toxin LspiSicTox-betaIE1i.